A 231-amino-acid polypeptide reads, in one-letter code: DNA mismatch repair protein MutH (231 aa).

Belongs to the MutH family.

The protein resides in the cytoplasm. Functionally, sequence-specific endonuclease that cleaves unmethylated GATC sequences. It is involved in DNA mismatch repair. This is DNA mismatch repair protein MutH from Salmonella paratyphi A (strain ATCC 9150 / SARB42).